Consider the following 312-residue polypeptide: Ribosomal RNA small subunit methyltransferase H (312 aa).

S-adenosyl-L-methionine is bound by residues 34-36, Asp-54, Leu-83, Asp-99, and Gln-106; that span reads GGH.

This sequence belongs to the methyltransferase superfamily. RsmH family.

Its subcellular location is the cytoplasm. The enzyme catalyses cytidine(1402) in 16S rRNA + S-adenosyl-L-methionine = N(4)-methylcytidine(1402) in 16S rRNA + S-adenosyl-L-homocysteine + H(+). Its function is as follows. Specifically methylates the N4 position of cytidine in position 1402 (C1402) of 16S rRNA. This Rubrobacter xylanophilus (strain DSM 9941 / JCM 11954 / NBRC 16129 / PRD-1) protein is Ribosomal RNA small subunit methyltransferase H.